We begin with the raw amino-acid sequence, 288 residues long: MKIDISAIKKLRDLTGAGVGDCKEALSSCDGDIEKAKNYLREQGIAKAYKKSTKDVSDGLIAIHVDGNKGAILEVNSETDFVARNEKFQKLVLNLVSLANQYATESIEDFLKHEYISGTSVHDEIMSNIAIIGENIHLNKIGCLSVNSGVVSGYIHNPVIDNLGKIGAIVALESNGDSEKLKVLAKQIAMHIVAAKPEALSLDVLDKDLLNKEREIIKKQVDQLNKPAAVAEKIIDGRMAKFYQDVVLLDQVFVMDSQLTISELVKRKESELAETINLIGYKLFVINK.

Residues 79–82 are involved in Mg(2+) ion dislocation from EF-Tu; sequence TDFV.

This sequence belongs to the EF-Ts family.

The protein resides in the cytoplasm. Its function is as follows. Associates with the EF-Tu.GDP complex and induces the exchange of GDP to GTP. It remains bound to the aminoacyl-tRNA.EF-Tu.GTP complex up to the GTP hydrolysis stage on the ribosome. This chain is Elongation factor Ts, found in Ehrlichia canis (strain Jake).